The chain runs to 255 residues: 1-(5-phosphoribosyl)-5-[(5-phosphoribosylamino)methylideneamino] imidazole-4-carboxamide isomerase (255 aa).

Aspartate 8 serves as the catalytic Proton acceptor. The active-site Proton donor is the aspartate 129.

Belongs to the HisA/HisF family.

Its subcellular location is the cytoplasm. The catalysed reaction is 1-(5-phospho-beta-D-ribosyl)-5-[(5-phospho-beta-D-ribosylamino)methylideneamino]imidazole-4-carboxamide = 5-[(5-phospho-1-deoxy-D-ribulos-1-ylimino)methylamino]-1-(5-phospho-beta-D-ribosyl)imidazole-4-carboxamide. The protein operates within amino-acid biosynthesis; L-histidine biosynthesis; L-histidine from 5-phospho-alpha-D-ribose 1-diphosphate: step 4/9. The sequence is that of 1-(5-phosphoribosyl)-5-[(5-phosphoribosylamino)methylideneamino] imidazole-4-carboxamide isomerase from Prochlorococcus marinus (strain MIT 9303).